A 366-amino-acid chain; its full sequence is tRNA/tmRNA (uracil-C(5))-methyltransferase (366 aa).

Gln190, Tyr218, Asn223, Glu239, and Asp299 together coordinate S-adenosyl-L-methionine. The active-site Nucleophile is the Cys324. Glu358 serves as the catalytic Proton acceptor.

This sequence belongs to the class I-like SAM-binding methyltransferase superfamily. RNA M5U methyltransferase family. TrmA subfamily.

The enzyme catalyses uridine(54) in tRNA + S-adenosyl-L-methionine = 5-methyluridine(54) in tRNA + S-adenosyl-L-homocysteine + H(+). It carries out the reaction uridine(341) in tmRNA + S-adenosyl-L-methionine = 5-methyluridine(341) in tmRNA + S-adenosyl-L-homocysteine + H(+). Functionally, dual-specificity methyltransferase that catalyzes the formation of 5-methyluridine at position 54 (m5U54) in all tRNAs, and that of position 341 (m5U341) in tmRNA (transfer-mRNA). The polypeptide is tRNA/tmRNA (uracil-C(5))-methyltransferase (Escherichia coli O7:K1 (strain IAI39 / ExPEC)).